We begin with the raw amino-acid sequence, 688 residues long: Elongation factor G (688 aa).

The 275-residue stretch at 8–282 folds into the tr-type G domain; sequence EKTRNIGIIA…AIVDYLPAPC (275 aa). GTP contacts are provided by residues 17 to 24, 81 to 85, and 135 to 138; these read AHIDAGKT, DTPGH, and NKMD.

This sequence belongs to the TRAFAC class translation factor GTPase superfamily. Classic translation factor GTPase family. EF-G/EF-2 subfamily.

Its subcellular location is the cytoplasm. In terms of biological role, catalyzes the GTP-dependent ribosomal translocation step during translation elongation. During this step, the ribosome changes from the pre-translocational (PRE) to the post-translocational (POST) state as the newly formed A-site-bound peptidyl-tRNA and P-site-bound deacylated tRNA move to the P and E sites, respectively. Catalyzes the coordinated movement of the two tRNA molecules, the mRNA and conformational changes in the ribosome. The protein is Elongation factor G of Onion yellows phytoplasma (strain OY-M).